Here is a 210-residue protein sequence, read N- to C-terminus: Probable glutathione peroxidase 8 (210 aa).

The chain crosses the membrane as a helical span at residues 13–35 (ASRAGLFKVLLSVALCMGSLYLL).

Belongs to the glutathione peroxidase family.

It is found in the membrane. The catalysed reaction is 2 glutathione + H2O2 = glutathione disulfide + 2 H2O. The polypeptide is Probable glutathione peroxidase 8 (gpx8) (Danio rerio (Zebrafish)).